Consider the following 128-residue polypeptide: Conopressin-conophysin (128 aa).

The first 27 residues, 1–27, serve as a signal peptide directing secretion; the sequence is MTRSAMQMGRLTLVLCLLLLLLLTTQA. Cys-28 and Cys-33 are disulfide-bonded. Position 36 is a glycine amide (Gly-36). The propeptide occupies 37–44; that stretch reads GKRDVDER. 7 cysteine pairs are disulfide-bonded: Cys-50/Cys-90, Cys-53/Cys-64, Cys-58/Cys-80, Cys-65/Cys-70, Cys-97/Cys-115, Cys-109/Cys-127, and Cys-116/Cys-121.

This sequence belongs to the vasopressin/oxytocin family. In terms of tissue distribution, expressed by the venom gland.

The protein localises to the secreted. Its function is as follows. Targets vasopressin-oxytocin related receptors. Is more active on fish receptors than on their human counterparts, supporting an evolved role of this conopressin in the envenomation process. Acts as an agonist on zebrafish vasopressin receptors V1a1R (EC(50)=10.6 nM), V1a2R (EC(50)=44.06 nM, partial agonist), V2R (EC(50)=299.2 nM) and oxytocin receptor (EC(50)=353.73 nM, partial agonist). Shows a weaker activity on human receptors AVPR1B (EC(50)=51.92 nM), AVPR1A (EC(50)=123.78 nM), AVPR2 (EC(50)=299.2 nM) and oxytocin (OXTR) receptor (EC(50)=455.66 nM, partial agonist). In vivo, exhibits grooming and scratching behavior in mice, following intracerebral injection. This is Conopressin-conophysin from Conus geographus (Geography cone).